The chain runs to 292 residues: GTP cyclohydrolase FolE2 (292 aa).

The protein belongs to the GTP cyclohydrolase IV family.

It carries out the reaction GTP + H2O = 7,8-dihydroneopterin 3'-triphosphate + formate + H(+). The protein operates within cofactor biosynthesis; 7,8-dihydroneopterin triphosphate biosynthesis; 7,8-dihydroneopterin triphosphate from GTP: step 1/1. Functionally, converts GTP to 7,8-dihydroneopterin triphosphate. This Staphylococcus haemolyticus (strain JCSC1435) protein is GTP cyclohydrolase FolE2.